Here is a 417-residue protein sequence, read N- to C-terminus: Serine hydroxymethyltransferase (417 aa).

Residues Leu-121 and 125–127 each bind (6S)-5,6,7,8-tetrahydrofolate; that span reads GHL. The residue at position 229 (Lys-229) is an N6-(pyridoxal phosphate)lysine. 355-357 is a binding site for (6S)-5,6,7,8-tetrahydrofolate; the sequence is SPF.

This sequence belongs to the SHMT family. Homodimer. Requires pyridoxal 5'-phosphate as cofactor.

The protein resides in the cytoplasm. The enzyme catalyses (6R)-5,10-methylene-5,6,7,8-tetrahydrofolate + glycine + H2O = (6S)-5,6,7,8-tetrahydrofolate + L-serine. The protein operates within one-carbon metabolism; tetrahydrofolate interconversion. It participates in amino-acid biosynthesis; glycine biosynthesis; glycine from L-serine: step 1/1. In terms of biological role, catalyzes the reversible interconversion of serine and glycine with tetrahydrofolate (THF) serving as the one-carbon carrier. This reaction serves as the major source of one-carbon groups required for the biosynthesis of purines, thymidylate, methionine, and other important biomolecules. Also exhibits THF-independent aldolase activity toward beta-hydroxyamino acids, producing glycine and aldehydes, via a retro-aldol mechanism. The sequence is that of Serine hydroxymethyltransferase from Photorhabdus laumondii subsp. laumondii (strain DSM 15139 / CIP 105565 / TT01) (Photorhabdus luminescens subsp. laumondii).